The primary structure comprises 597 residues: Arginine--tRNA ligase (597 aa).

The 'HIGH' region signature appears at 125-135; sequence PNTNKPLHLGH.

Belongs to the class-I aminoacyl-tRNA synthetase family. As to quaternary structure, monomer.

Its subcellular location is the cytoplasm. It carries out the reaction tRNA(Arg) + L-arginine + ATP = L-arginyl-tRNA(Arg) + AMP + diphosphate. This chain is Arginine--tRNA ligase, found in Porphyromonas gingivalis (strain ATCC 33277 / DSM 20709 / CIP 103683 / JCM 12257 / NCTC 11834 / 2561).